The following is a 198-amino-acid chain: MFDKLVVIDAKGHLLGRLASYVAKELLSGQRIVVVRTEAINISGSLFRNRVKFSEFLNKWMNHNPRRGVQHFRAPSRIFWRAVRGMLPHKTPKGAAALERLKIFEGIPTPYDRVKKQVVVDALKVQRLRNSRPVCKLGDLSASVGWGKQTLIEKLEEKRRARAKTYHDKKVKQADARKKELAAPALKAIKDKLAQFGY.

Belongs to the universal ribosomal protein uL13 family.

This is Large ribosomal subunit protein uL13 (RPL13A) from Tetrahymena thermophila (strain SB210).